The chain runs to 624 residues: E3 ubiquitin-protein ligase RLIM (624 aa).

The residue at position 1 (methionine 1) is an N-acetylmethionine. Over residues 1-11 the composition is skewed to basic and acidic residues; that stretch reads MENSDSNDKGS. 5 disordered regions span residues 1-25, 72-251, 257-276, 291-363, and 424-522; these read MENS…QMDR, KEGP…SQTF, NETE…QQIS, TRNA…RGGF, and SDSE…TFDE. Over residues 104 to 132 the composition is skewed to polar residues; sequence SVRQTGNTTRSGQRGNQSWRAVSRTNPNS. The span at 142 to 153 shows a compositional bias: low complexity; it reads NVNRNNGSQNSE. Phosphoserine is present on serine 164. The segment covering 165–188 has biased composition (polar residues); sequence GENVENNSQRQVENPRSESTSARP. Residues serine 195, serine 228, serine 230, and serine 276 each carry the phosphoserine modification. Residues 214 to 229 are compositionally biased toward basic and acidic residues; the sequence is RSPDHRRTRARAERSR. The segment covering 291 to 315 has biased composition (polar residues); the sequence is TRNASQGAGSSDTAASGESTGSGQR. Positions 329–339 are enriched in basic and acidic residues; sequence RPGEYRQRDSI. A compositionally biased stretch (polar residues) spans 340–356; the sequence is ASRTRSRSQTPNNTVTY. The span at 445–454 shows a compositional bias: gly residues; it reads GRGGSGGGSS. Over residues 455–507 the composition is skewed to low complexity; that stretch reads SGSSSSSSSSSSSSSSSSSSSSPSSSSGGESSETSSDLFEGSNEGSSSSGSSG. The RING-type zinc finger occupies 570-611; that stretch reads CSVCITEYTEGNKLRKLPCSHEYHVHCIDRWLSENSTCPICR. The PDZ-binding motif lies at 621-624; it reads ESVV.

Belongs to the RNF12 family. In terms of assembly, interacts with LIM/homeobox factors such as LHX3. Interacts with LDB1, LDB2 and SIN3A. Interacts with LIMK1. Interacts (via N-terminus) with TERF1. Interacts (via C-terminus) with ESR1. In terms of tissue distribution, expressed in many tissues.

Its subcellular location is the nucleus. It catalyses the reaction S-ubiquitinyl-[E2 ubiquitin-conjugating enzyme]-L-cysteine + [acceptor protein]-L-lysine = [E2 ubiquitin-conjugating enzyme]-L-cysteine + N(6)-ubiquitinyl-[acceptor protein]-L-lysine.. It functions in the pathway protein modification; protein ubiquitination. Functionally, E3 ubiquitin-protein ligase. Acts as a negative coregulator for LIM homeodomain transcription factors by mediating the ubiquitination and subsequent degradation of LIM cofactors LDB1 and LDB2 and by mediating the recruitment the SIN3a/histone deacetylase corepressor complex. Ubiquitination and degradation of LIM cofactors LDB1 and LDB2 allows DNA-bound LIM homeodomain transcription factors to interact with other protein partners such as RLIM. Plays a role in telomere length-mediated growth suppression by mediating the ubiquitination and degradation of TERF1. By targeting ZFP42 for degradation, acts as an activator of random inactivation of X chromosome in the embryo, a stochastic process in which one X chromosome is inactivated to minimize sex-related dosage differences of X-encoded genes in somatic cells of female placental mammals. The chain is E3 ubiquitin-protein ligase RLIM (RLIM) from Homo sapiens (Human).